A 186-amino-acid chain; its full sequence is Elongation factor P (186 aa).

The protein belongs to the elongation factor P family.

The protein localises to the cytoplasm. It participates in protein biosynthesis; polypeptide chain elongation. Involved in peptide bond synthesis. Stimulates efficient translation and peptide-bond synthesis on native or reconstituted 70S ribosomes in vitro. Probably functions indirectly by altering the affinity of the ribosome for aminoacyl-tRNA, thus increasing their reactivity as acceptors for peptidyl transferase. The chain is Elongation factor P from Elusimicrobium minutum (strain Pei191).